The sequence spans 593 residues: ATP-dependent lipid A-core flippase (593 aa).

6 helical membrane passes run Ile33–Ile53, Trp75–Ser95, Ala137–Val157, Ile164–Ile184, Gln262–Val282, and Gly292–Ile312. Positions Val37–Arg320 constitute an ABC transmembrane type-1 domain. The ABC transporter domain occupies Ile352–Ile586. An ATP-binding site is contributed by Gly386 to Thr393.

The protein belongs to the ABC transporter superfamily. Lipid exporter (TC 3.A.1.106) family. As to quaternary structure, homodimer.

The protein localises to the cell inner membrane. The catalysed reaction is ATP + H2O + lipid A-core oligosaccharideSide 1 = ADP + phosphate + lipid A-core oligosaccharideSide 2.. Involved in lipopolysaccharide (LPS) biosynthesis. Translocates lipid A-core from the inner to the outer leaflet of the inner membrane. Transmembrane domains (TMD) form a pore in the inner membrane and the ATP-binding domain (NBD) is responsible for energy generation. This Burkholderia orbicola (strain AU 1054) protein is ATP-dependent lipid A-core flippase.